The chain runs to 182 residues: Adenylate kinase (182 aa).

12–17 (GAGKGT) contacts ATP. Residues 32–61 (STGDLLRDEVSSGSVLGIKAAEIMNKGELV) are NMP. AMP-binding positions include threonine 33, arginine 38, 59–61 (ELV), 85–88 (GFPR), and glutamine 92. The interval 126 to 132 (ERGRQDD) is LID. Arginine 127 is a binding site for ATP. AMP is bound by residues arginine 129 and arginine 140. Residue alanine 168 participates in ATP binding.

This sequence belongs to the adenylate kinase family. In terms of assembly, monomer.

The protein resides in the cytoplasm. It carries out the reaction AMP + ATP = 2 ADP. The protein operates within purine metabolism; AMP biosynthesis via salvage pathway; AMP from ADP: step 1/1. Catalyzes the reversible transfer of the terminal phosphate group between ATP and AMP. Plays an important role in cellular energy homeostasis and in adenine nucleotide metabolism. The sequence is that of Adenylate kinase from Prochlorococcus marinus (strain NATL2A).